We begin with the raw amino-acid sequence, 310 residues long: Ornithine carbamoyltransferase (310 aa).

Carbamoyl phosphate contacts are provided by residues 58-61, Gln-85, Arg-109, and 136-139; these read STRT and HPCQ. L-ornithine-binding positions include Asn-167, Asp-227, and 231–232; that span reads SM. Residues 266–267 and Arg-294 each bind carbamoyl phosphate; that span reads CL.

This sequence belongs to the aspartate/ornithine carbamoyltransferase superfamily. OTCase family.

The protein resides in the cytoplasm. The enzyme catalyses carbamoyl phosphate + L-ornithine = L-citrulline + phosphate + H(+). It participates in amino-acid biosynthesis; L-arginine biosynthesis; L-arginine from L-ornithine and carbamoyl phosphate: step 1/3. Reversibly catalyzes the transfer of the carbamoyl group from carbamoyl phosphate (CP) to the N(epsilon) atom of ornithine (ORN) to produce L-citrulline. This chain is Ornithine carbamoyltransferase, found in Rhodopseudomonas palustris (strain ATCC BAA-98 / CGA009).